The chain runs to 186 residues: Large ribosomal subunit protein uL5 (186 aa).

Belongs to the universal ribosomal protein uL5 family. Part of the 50S ribosomal subunit; part of the 5S rRNA/L5/L18/L25 subcomplex. Contacts the 5S rRNA and the P site tRNA. Forms a bridge to the 30S subunit in the 70S ribosome.

In terms of biological role, this is one of the proteins that bind and probably mediate the attachment of the 5S RNA into the large ribosomal subunit, where it forms part of the central protuberance. In the 70S ribosome it contacts protein S13 of the 30S subunit (bridge B1b), connecting the 2 subunits; this bridge is implicated in subunit movement. Contacts the P site tRNA; the 5S rRNA and some of its associated proteins might help stabilize positioning of ribosome-bound tRNAs. The protein is Large ribosomal subunit protein uL5 of Legionella pneumophila subsp. pneumophila (strain Philadelphia 1 / ATCC 33152 / DSM 7513).